The chain runs to 952 residues: Bromodomain testis-specific protein (952 aa).

The Bromo 1 domain maps to 26–132; it reads RLTNQLQFLQ…KLFMQKLSQM (107 aa). The segment covering 141 to 150 has biased composition (basic and acidic residues); sequence GKERMKKDIQ. A disordered region spans residues 141 to 168; sequence GKERMKKDIQQKTAVSSAKEQTPSKSAE. Polar residues predominate over residues 151 to 167; it reads QKTAVSSAKEQTPSKSA. Ser-186 carries the post-translational modification Phosphoserine. The short motif at 208–219 is the Nuclear localization signal element; the sequence is KGVKRRADTTTP. Residues 209-257 are disordered; sequence GVKRRADTTTPTTSSAKASSESPPPLREAKPANAPVKENTVKSVLPDSQ. A compositionally biased stretch (low complexity) spans 216–229; sequence TTTPTTSSAKASSE. Residues 266–375 form the Bromo 2 domain; the sequence is VKVTEQLKHC…DVFEMHFAKI (110 aa). Disordered stretches follow at residues 392 to 420, 442 to 504, 607 to 746, and 850 to 930; these read SAKA…ERVQ, VPLR…NAKP, QLNC…GCQV, and KHLE…RREA. A coiled-coil region spans residues 417–442; the sequence is ERVQRLAKLQEQLNAVHQQLQVLSQV. A compositionally biased stretch (basic residues) spans 445–463; that stretch reads RKLKKKNEKSKRAPKRKKV. The region spanning 495-577 is the NET domain; the sequence is KLEEEDNAKP…ACLRKRSLKP (83 aa). Positions 610–619 are enriched in basic residues; sequence CRKRQTKRPA. Pro residues predominate over residues 625 to 638; it reads PRPPLPPPPPPPPE. Over residues 646–681 the composition is skewed to low complexity; it reads SDSSSSSSSSGSGSSSSSSSSSGSGSSSSDSSSSDS. The span at 718–729 shows a compositional bias: polar residues; it reads SAETALVQQSTG. Positions 837–936 form a coiled coil; sequence EKEVKARTQE…RREAMAGTID (100 aa). The segment covering 850 to 867 has biased composition (basic and acidic residues); sequence KHLEHSAKDPKVSQESQR. Residues 874-883 are compositionally biased toward polar residues; the sequence is TPESSSNKVQ. Low complexity predominate over residues 893–902; sequence EQQQLPSPSE. The span at 911–930 shows a compositional bias: basic and acidic residues; sequence LLKDRNLAREKEQERRRREA.

This sequence belongs to the BET family. In terms of assembly, interacts with the acetylated N-terminus of histone H1, H2, H3 and H4. Interacts with P-TEFb components CDK9 and CCNT1/cyclin-T1. Interacts with mRNA splicing machinery proteins SRSF2, DDX5, HNRNPK and TARDBP. Interacts with SMARCE1. Ubiquitinated in a SPOP-dependent manner, leading to proteasomal degradation.

It is found in the nucleus. Testis-specific chromatin protein that specifically binds histone H4 acetylated at 'Lys-5' and 'Lys-8' (H4K5ac and H4K8ac, respectively) and plays a key role in spermatogenesis. Required in late pachytene spermatocytes: plays a role in meiotic and post-meiotic cells by binding to acetylated histones at the promoter of specific meiotic and post-meiotic genes, facilitating their activation at the appropriate time. In the post-meiotic phase of spermatogenesis, binds to hyperacetylated histones and participates in their general removal from DNA. Also recognizes and binds a subset of butyrylated histones: able to bind histone H4 butyrylated at 'Lys-8' (H4K8ac), while it is not able to bind H4 butyrylated at 'Lys-5' (H4K5ac). Also acts as a component of the splicing machinery in pachytene spermatocytes and round spermatids and participates in 3'-UTR truncation of specific mRNAs in post-meiotic spermatids. Required for chromocenter organization, a structure comprised of peri-centromeric heterochromatin. This chain is Bromodomain testis-specific protein (Brdt), found in Rattus norvegicus (Rat).